The sequence spans 73 residues: MSDVLIRDIPDDVLASLDAIAARLGLSRTEYIRRRLAQDAQTARVTVTAADLRRLRGAVAGLGDPELMRQAWR.

Forms a homodimer, which binds to a toxin homodimer, which then oligomerizes further to a hetero-octamer. When bound to toxin VapC2 the toxin activity is inhibited; 1 antitoxin may suffice to inhibit toxin.

In terms of biological role, antitoxin component of a type II toxin-antitoxin (TA) system. Upon expression in M.smegmatis neutralizes the effect of cognate toxin VapC2. The C-terminal helix of the antitoxin may obstruct the toxin's RNA-binding groove, blocking access to the active sites. Additionally, the C-terminal arginine of the antitoxin may remove Mg(2+) ions from the toxin active sites. This Mycobacterium tuberculosis (strain ATCC 25618 / H37Rv) protein is Antitoxin VapB2 (vapB2).